A 110-amino-acid chain; its full sequence is Nucleoid-associated protein YpAngola_A2890 (110 aa).

A disordered region spans residues lysine 90 to phenylalanine 110.

Belongs to the YbaB/EbfC family. As to quaternary structure, homodimer.

It is found in the cytoplasm. Its subcellular location is the nucleoid. Binds to DNA and alters its conformation. May be involved in regulation of gene expression, nucleoid organization and DNA protection. The chain is Nucleoid-associated protein YpAngola_A2890 from Yersinia pestis bv. Antiqua (strain Angola).